The sequence spans 361 residues: UDP-N-acetylglucosamine--N-acetylmuramyl-(pentapeptide) pyrophosphoryl-undecaprenol N-acetylglucosamine transferase (361 aa).

UDP-N-acetyl-alpha-D-glucosamine is bound by residues 11 to 13 (TGG), N124, R164, S192, and Q295.

Belongs to the glycosyltransferase 28 family. MurG subfamily.

The protein resides in the cell membrane. It catalyses the reaction di-trans,octa-cis-undecaprenyl diphospho-N-acetyl-alpha-D-muramoyl-L-alanyl-D-glutamyl-meso-2,6-diaminopimeloyl-D-alanyl-D-alanine + UDP-N-acetyl-alpha-D-glucosamine = di-trans,octa-cis-undecaprenyl diphospho-[N-acetyl-alpha-D-glucosaminyl-(1-&gt;4)]-N-acetyl-alpha-D-muramoyl-L-alanyl-D-glutamyl-meso-2,6-diaminopimeloyl-D-alanyl-D-alanine + UDP + H(+). It functions in the pathway cell wall biogenesis; peptidoglycan biosynthesis. Cell wall formation. Catalyzes the transfer of a GlcNAc subunit on undecaprenyl-pyrophosphoryl-MurNAc-pentapeptide (lipid intermediate I) to form undecaprenyl-pyrophosphoryl-MurNAc-(pentapeptide)GlcNAc (lipid intermediate II). This is UDP-N-acetylglucosamine--N-acetylmuramyl-(pentapeptide) pyrophosphoryl-undecaprenol N-acetylglucosamine transferase from Deinococcus geothermalis (strain DSM 11300 / CIP 105573 / AG-3a).